The primary structure comprises 581 residues: Cytosolic Fe-S cluster assembly factor nar-1 (581 aa).

[4Fe-4S] cluster is bound by residues C20, C68, C71, C74, C215, C270, C457, and C461.

The protein belongs to the NARF family.

Functionally, component of the cytosolic Fe/S protein assembly machinery. Required for maturation of extramitochondrial Fe/S proteins. May play a role in the transfer of pre-assembled Fe/S clusters to target apoproteins. The protein is Cytosolic Fe-S cluster assembly factor nar-1 (nar-1) of Neurospora crassa (strain ATCC 24698 / 74-OR23-1A / CBS 708.71 / DSM 1257 / FGSC 987).